The chain runs to 1301 residues: Dentin sialophosphoprotein (1301 aa).

The N-terminal stretch at 1-15 is a signal peptide; that stretch reads MKIITYFCIWAVAWA. N-linked (GlcNAc...) asparagine glycosylation is found at asparagine 41 and asparagine 49. A disordered region spans residues 55-89; sequence KESGVLVHEGDRGRQENTQDGHKGEGNGSKWAEVG. A compositionally biased stretch (basic and acidic residues) spans 62–79; that stretch reads HEGDRGRQENTQDGHKGE. 7 N-linked (GlcNAc...) asparagine glycosylation sites follow: asparagine 81, asparagine 130, asparagine 150, asparagine 190, asparagine 191, asparagine 209, and asparagine 222. Positions 146 to 165 are enriched in polar residues; sequence AGATNRSNTNGNTDKNTQNG. The interval 146–171 is disordered; the sequence is AGATNRSNTNGNTDKNTQNGDVGDAG. A disordered region spans residues 202-1301; it reads NSCRNEGNTS…SDSNHSTSDD (1100 aa). The segment covering 203 to 221 has biased composition (polar residues); it reads SCRNEGNTSEITPQINSKR. Acidic residues predominate over residues 251–267; sequence ADEDEDEGSGDDEDEEA. Serine 259 bears the Phosphoserine; by CK1 mark. Over residues 271 to 280 the composition is skewed to polar residues; that stretch reads KDSSNNSKGQ. Asparagine 275 carries an N-linked (GlcNAc...) asparagine glycan. Basic and acidic residues-rich tracts occupy residues 281-293 and 300-327; these read EGQD…DHDS and DSKE…KSEE. Position 301 is a phosphoserine (serine 301). An N-linked (GlcNAc...) asparagine glycan is attached at asparagine 336. Residues 340-377 are compositionally biased toward basic and acidic residues; that stretch reads RIEDTQKLNHRESKRVENRITKESETHAVGKSQDKGIE. Asparagine 387 carries an N-linked (GlcNAc...) asparagine glycan. Over residues 388–404 the composition is skewed to basic and acidic residues; the sequence is ITKEVGKGNEGKEDKGQ. Composition is skewed to low complexity over residues 439–452 and 462–487; these read SNTG…GYDS and GDDP…NSSS. The Cell attachment site signature appears at 488–490; the sequence is RGD. Residues 488–506 show a composition bias toward polar residues; sequence RGDASYNSDESKDNGNGSD. Residues 518–534 show a composition bias toward low complexity; the sequence is TSDTNNSDSNGNGNNGN. Basic and acidic residues predominate over residues 536–549; it reads DNDKSDSGKGKSDS. Over residues 555-564 the composition is skewed to low complexity; that stretch reads SDSSNSSDSS. The segment covering 581-595 has biased composition (acidic residues); it reads DSSDSDSSDSSDSDS. Residues 596–619 show a composition bias toward low complexity; it reads SDSSNSSDSSDSSDSSDSSDSSDS. Residues 620 to 642 are compositionally biased toward basic and acidic residues; that stretch reads SDSKSDSSKSESDSSDSDSKSDS. 4 stretches are compositionally biased toward low complexity: residues 643-705, 715-1264, 1272-1284, and 1292-1301; these read SDSN…SDSS, SSDS…STSD, QSKS…NGSD, and SDSNHSTSDD.

In terms of assembly, interacts with FBLN7. DSP is glycosylated. As to expression, expressed in teeth. DPP is synthesized by odontoblast and transiently expressed by pre-ameloblasts.

The protein localises to the secreted. It localises to the extracellular space. Its subcellular location is the extracellular matrix. Functionally, DSP may be an important factor in dentinogenesis. DPP may bind high amount of calcium and facilitate initial mineralization of dentin matrix collagen as well as regulate the size and shape of the crystals. This chain is Dentin sialophosphoprotein (DSPP), found in Homo sapiens (Human).